The sequence spans 100 residues: Aspartyl/glutamyl-tRNA(Asn/Gln) amidotransferase subunit C (100 aa).

Belongs to the GatC family. In terms of assembly, heterotrimer of A, B and C subunits.

It carries out the reaction L-glutamyl-tRNA(Gln) + L-glutamine + ATP + H2O = L-glutaminyl-tRNA(Gln) + L-glutamate + ADP + phosphate + H(+). It catalyses the reaction L-aspartyl-tRNA(Asn) + L-glutamine + ATP + H2O = L-asparaginyl-tRNA(Asn) + L-glutamate + ADP + phosphate + 2 H(+). In terms of biological role, allows the formation of correctly charged Asn-tRNA(Asn) or Gln-tRNA(Gln) through the transamidation of misacylated Asp-tRNA(Asn) or Glu-tRNA(Gln) in organisms which lack either or both of asparaginyl-tRNA or glutaminyl-tRNA synthetases. The reaction takes place in the presence of glutamine and ATP through an activated phospho-Asp-tRNA(Asn) or phospho-Glu-tRNA(Gln). This is Aspartyl/glutamyl-tRNA(Asn/Gln) amidotransferase subunit C from Dictyoglomus thermophilum (strain ATCC 35947 / DSM 3960 / H-6-12).